A 710-amino-acid polypeptide reads, in one-letter code: Choline transporter-like protein 5 (710 aa).

The tract at residues 1 to 21 is disordered; the sequence is MARKRKPPSSQGDPRRYDPDF. Residues 1–32 are Cytoplasmic-facing; the sequence is MARKRKPPSSQGDPRRYDPDFQGPTAKRTCTD. Residues 33–53 form a helical membrane-spanning segment; sequence VLCCLIFLLFILGYVLLGLLA. At 54-236 the chain is on the extracellular side; sequence WAHGDPRKMA…KLLEDYATSW (183 aa). N82 and N184 each carry an N-linked (GlcNAc...) asparagine glycan. A helical transmembrane segment spans residues 237–257; sequence KWILIGLTVAMALSWTFLILL. Residues 258–260 are Cytoplasmic-facing; it reads RFT. Residues 261–281 traverse the membrane as a helical segment; sequence AGFLFWFFIFGVLGIIGYGIW. At 282-319 the chain is on the extracellular side; that stretch reads YCFLEYSSIQQRPQSTFWMYGFGIQRRVNMFFHLKETW. Residues 320-340 form a helical membrane-spanning segment; that stretch reads FSMMIILSAIEIIIIIVLIFL. Topologically, residues 341–345 are cytoplasmic; it reads RTRIQ. A helical transmembrane segment spans residues 346–366; the sequence is VAIILLQEGSKAISYLPSALI. The Extracellular portion of the chain corresponds to 367–368; sequence YP. Residues 369 to 389 form a helical membrane-spanning segment; that stretch reads VLTFILLSICISYWAVTAVFL. Over 390 to 454 the chain is Cytoplasmic; it reads ATSGVPIFKV…NYILTFQVYN (65 aa). Residues 455–475 traverse the membrane as a helical segment; that stretch reads LFAFLWLINFVIALGQCALAG. The Extracellular portion of the chain corresponds to 476–509; sequence AFASYYWAMKKPDDIPPYPLFTAFGRAVRYHTGS. The chain crosses the membrane as a helical span at residues 510-530; it reads LAFGSLILASVQMFKVIVEYL. Topologically, residues 531–604 are cytoplasmic; sequence DRRLKKAQNS…KVTVTDEVTY (74 aa). A helical membrane pass occupies residues 605–625; the sequence is FVLLLGKVLVSGIVGVLAFLL. Over 626-643 the chain is Extracellular; it reads FTERLQIIVDGPTTLNYY. Residues 644-664 form a helical membrane-spanning segment; sequence WVPFLTLVFGSYMIAHGFFSV. Residues 665–710 are Cytoplasmic-facing; sequence YSMCVETIFICFLEDLERNEGSPSRPYFVTPALMNILLEQGKIKKQ.

This sequence belongs to the CTL (choline transporter-like) family.

It localises to the cell membrane. The enzyme catalyses choline(out) + n H(+)(in) = choline(in) + n H(+)(out). Functionally, choline/H+ antiporter. The chain is Choline transporter-like protein 5 (Slc44a5) from Mus musculus (Mouse).